The chain runs to 255 residues: MSAAAAGRGERLNHAGNPGHRSKYSRVLLKLGGEMFGGGQVGLDLDVVAQVARQIAEVVRGGVQVAVVIGGGNFFRGAQLQQRGMERTRSDYMGMLGTVMNSLALQDFLEKEGIATRVQTAITMGQVAEPYLPLRAVRHLEKGRVVIFGAGMGLPYFSTDTTAAQRALEIGADVVLMAKAVDGVFVEDPRVNPEAELLTAISHREVIDRGLRVADATAFSLCMDNGMPILVFNLLTNGNIARAVAGEKIGTLVTT.

The disordered stretch occupies residues 1 to 21 (MSAAAAGRGERLNHAGNPGHR). 30–33 (KLGG) serves as a coordination point for ATP. A UMP-binding site is contributed by Gly-71. The ATP site is built by Gly-72 and Arg-76. UMP is bound by residues Asp-91 and 152 to 159 (MGLPYFST). The ATP site is built by Phe-185 and Asp-188.

The protein belongs to the UMP kinase family. Homohexamer.

It localises to the cytoplasm. It carries out the reaction UMP + ATP = UDP + ADP. It functions in the pathway pyrimidine metabolism; CTP biosynthesis via de novo pathway; UDP from UMP (UMPK route): step 1/1. Its activity is regulated as follows. Inhibited by UTP. Functionally, catalyzes the reversible phosphorylation of UMP to UDP. This is Uridylate kinase from Mycobacterium leprae (strain TN).